A 194-amino-acid chain; its full sequence is Fe/S biogenesis protein NfuA (194 aa).

[4Fe-4S] cluster-binding residues include Cys-152 and Cys-155.

Belongs to the NfuA family. As to quaternary structure, homodimer. Requires [4Fe-4S] cluster as cofactor.

Its function is as follows. Involved in iron-sulfur cluster biogenesis. Binds a 4Fe-4S cluster, can transfer this cluster to apoproteins, and thereby intervenes in the maturation of Fe/S proteins. Could also act as a scaffold/chaperone for damaged Fe/S proteins. The chain is Fe/S biogenesis protein NfuA from Stutzerimonas stutzeri (strain A1501) (Pseudomonas stutzeri).